A 504-amino-acid chain; its full sequence is 26S proteasome non-ATPase regulatory subunit 5 (504 aa).

At alanine 2 the chain carries N-acetylalanine.

Belongs to the proteasome subunit S5B/HSM3 family. Interacts with PSMC1, PSMC2, PSMD1 and PSMD6. Part of transient complex containing PSMD5, PSMC2, PSMC1 and PSMD2 formed during the assembly of the 26S proteasome.

Functionally, acts as a chaperone during the assembly of the 26S proteasome, specifically of the base subcomplex of the PA700/19S regulatory complex (RC). In the initial step of the base subcomplex assembly is part of an intermediate PSMD5:PSMC2:PSMC1:PSMD2 module which probably assembles with a PSMD10:PSMC4:PSMC5:PAAF1 module followed by dissociation of PSMD5. In Homo sapiens (Human), this protein is 26S proteasome non-ATPase regulatory subunit 5 (PSMD5).